Reading from the N-terminus, the 295-residue chain is UDP-N-acetylenolpyruvoylglucosamine reductase (295 aa).

An FAD-binding PCMH-type domain is found at 24-188; sequence KVGGNAEIFF…LKVIFKINKG (165 aa). R168 is an active-site residue. S217 (proton donor) is an active-site residue. E287 is an active-site residue.

This sequence belongs to the MurB family. FAD serves as cofactor.

Its subcellular location is the cytoplasm. The catalysed reaction is UDP-N-acetyl-alpha-D-muramate + NADP(+) = UDP-N-acetyl-3-O-(1-carboxyvinyl)-alpha-D-glucosamine + NADPH + H(+). It functions in the pathway cell wall biogenesis; peptidoglycan biosynthesis. In terms of biological role, cell wall formation. In Rickettsia rickettsii (strain Iowa), this protein is UDP-N-acetylenolpyruvoylglucosamine reductase.